Here is a 221-residue protein sequence, read N- to C-terminus: UPF0758 protein YicR (221 aa).

One can recognise an MPN domain in the interval Ala-99 to Ile-221. 3 residues coordinate Zn(2+): His-170, His-172, and Asp-183. The JAMM motif motif lies at His-170–Asp-183.

It belongs to the UPF0758 family. YicR subfamily.

This is UPF0758 protein YicR from Salmonella paratyphi A (strain ATCC 9150 / SARB42).